A 148-amino-acid polypeptide reads, in one-letter code: MRCVTRTRNWWRRAARMPRAGSSAWWVAVCKQVCTRVGTYAVCWCSWNTGRFTGCPSWKDFWKPVGPALHVFNVKCEAQRGLKLTQPFTVACKIDPVLCKSGLGFPPQLFTGCVYLSTYTYPWQAQAECVRCPRDSNRCKRITPSACL.

An N-terminal signal peptide occupies residues 1 to 35; sequence MRCVTRTRNWWRRAARMPRAGSSAWWVAVCKQVCT.

The protein resides in the secreted. This is an uncharacterized protein from Homo sapiens (Human).